We begin with the raw amino-acid sequence, 1420 residues long: DNA-directed RNA polymerase subunit beta'' (1420 aa).

C220, C295, C302, and C305 together coordinate Zn(2+).

This sequence belongs to the RNA polymerase beta' chain family. RpoC2 subfamily. As to quaternary structure, in plastids the minimal PEP RNA polymerase catalytic core is composed of four subunits: alpha, beta, beta', and beta''. When a (nuclear-encoded) sigma factor is associated with the core the holoenzyme is formed, which can initiate transcription. The cofactor is Zn(2+).

The protein resides in the plastid. It localises to the chloroplast. It catalyses the reaction RNA(n) + a ribonucleoside 5'-triphosphate = RNA(n+1) + diphosphate. Its function is as follows. DNA-dependent RNA polymerase catalyzes the transcription of DNA into RNA using the four ribonucleoside triphosphates as substrates. The sequence is that of DNA-directed RNA polymerase subunit beta'' from Adiantum capillus-veneris (Maidenhair fern).